We begin with the raw amino-acid sequence, 773 residues long: LON peptidase N-terminal domain and RING finger protein 1 (773 aa).

The disordered stretch occupies residues Met-1 to Glu-29. Residues Trp-48–Ala-81 form a TPR 1 repeat. The RING-type 1 zinc finger occupies Cys-123–Arg-159. TPR repeat units follow at residues Ala-212–Asp-244, Ile-246–Trp-278, and Pro-279–Phe-312. Polar residues predominate over residues Glu-359 to Lys-370. The tract at residues Glu-359–Asn-388 is disordered. A Phosphoserine modification is found at Ser-431. An RING-type 2 zinc finger spans residues Cys-479–Lys-517. In terms of domain architecture, Lon N-terminal spans Thr-558–Ser-768.

This chain is LON peptidase N-terminal domain and RING finger protein 1 (LONRF1), found in Homo sapiens (Human).